Consider the following 442-residue polypeptide: Trigger factor (442 aa).

Positions 163–248 (YDRVTINYCI…IIKIEKKQEL (86 aa)) constitute a PPIase FKBP-type domain.

The protein belongs to the FKBP-type PPIase family. Tig subfamily.

Its subcellular location is the cytoplasm. It carries out the reaction [protein]-peptidylproline (omega=180) = [protein]-peptidylproline (omega=0). In terms of biological role, involved in protein export. Acts as a chaperone by maintaining the newly synthesized protein in an open conformation. Functions as a peptidyl-prolyl cis-trans isomerase. This Buchnera aphidicola subsp. Acyrthosiphon pisum (strain Tuc7) protein is Trigger factor.